Consider the following 1107-residue polypeptide: Voltage-gated delayed rectifier potassium channel KCNH8 (1107 aa).

Residues 1–225 (MPVMKGLLAP…HFSTFKAGWD (225 aa)) are Cytoplasmic-facing. The PAS domain occupies 18-90 (IATRFDGTHS…LQIEKSLEEK (73 aa)). In terms of domain architecture, PAC spans 93–145 (FKGEIMFYKKNGSPFWCLLDIVPIKNEKGDVVLFLASFKDITDTKVKITPEDK). Residues 226–246 (WLILLATFYVAVTVPYNVCFI) traverse the membrane as a helical segment. Over 247–255 (GNDDLSTTR) the chain is Extracellular. Residues 256–276 (STTVSDIAVEILFIIDIILNF) form a helical membrane-spanning segment. Over 277–298 (RTTYVSKSGQVIFEARSICIHY) the chain is Cytoplasmic. The helical transmembrane segment at 299–319 (VTTWFIIDLIAALPFDLLYAF) threads the bilayer. A glycan (N-linked (GlcNAc...) asparagine) is linked at Asn-320. Topologically, residues 320–327 (NVTVVSLV) are extracellular. The helical; Voltage-sensor transmembrane segment at 328-348 (HLLKTVRLLRLLRLLQKLDRY) threads the bilayer. Over 349–357 (SQHSTIVLT) the chain is Cytoplasmic. A helical membrane pass occupies residues 358-378 (LLMSMFALLAHWMACIWYVIG). Topologically, residues 379 to 419 (KMEREDNSLLKWEVGWLHELGKRLESPYYGNNTLGGPSIRS) are extracellular. Residue Asn-409 is glycosylated (N-linked (GlcNAc...) asparagine). The segment at residues 420 to 440 (AYIAALYFTLSSLTSVGFGNV) is an intramembrane region (pore-forming). The Selectivity filter signature appears at 434–439 (SVGFGN). Over 441–448 (SANTDAEK) the chain is Extracellular. A helical transmembrane segment spans residues 449 to 469 (IFSICTMLIGALMHALVFGNV). Over 470-1107 (TAIIQRMYSR…EVKDNKAINV (638 aa)) the chain is Cytoplasmic. A cNMP-binding domain region spans residues 551–668 (LFECASRGCL…HKFVEDIQHD (118 aa)). Positions 686 to 702 (SNKSMVSQSEPKGNGNI) are enriched in polar residues. 4 disordered regions span residues 686-742 (SNKS…NKKV), 764-791 (HSPIRVSRSNSPKTKQEIDPPNHNKRKE), 818-847 (EDGNSSEESQTFDFGSERIRSEPRISPPLG), and 961-989 (VDPSSVGSSPQRTGAHEQNPADSELYHSP). Acidic residues predominate over residues 710 to 724 (VEDEEEEEEGEEEEA). Positions 961-972 (VDPSSVGSSPQR) are enriched in polar residues.

It belongs to the potassium channel family. H (Eag) (TC 1.A.1.20) subfamily. Kv12.1/KCNH8 sub-subfamily. In terms of assembly, the potassium channel is probably composed of a homo- or heterotetrameric complex of pore-forming alpha subunits that can associate with modulating beta subunits. Primarily expressed in the nervous system.

The protein resides in the membrane. It catalyses the reaction K(+)(in) = K(+)(out). Pore-forming (alpha) subunit of a voltage-gated delayed rectifier potassium channel that mediates outward-rectifying potassium currents. Elicits a slowly activating, non-inactivating and slowly deactivation outwards potassium current at depolarizating voltages from -30 mV to +50mV. Shows no obvious change in the activation rate from different holding potentials. Activation is strongly dependent on the pH of the external solution. The chain is Voltage-gated delayed rectifier potassium channel KCNH8 from Homo sapiens (Human).